Consider the following 256-residue polypeptide: Exosome complex component RRP41-like (256 aa).

This sequence belongs to the RNase PH family. In terms of assembly, probable component of the RNA exosome complex. In terms of tissue distribution, highly expressed in imbibed seeds and young seedlings.

The protein localises to the cytoplasm. It is found in the nucleus. In terms of biological role, non-catalytic component of the RNA exosome complex which has 3'-&gt;5' exoribonuclease activity and participates in a multitude of cellular RNA processing, maturation and degradation events. In vitro, is a processive phosphorolytic exonuclease and requires a single-stranded poly(A) tail on the substrate RNA for its activity. Plays an important role in seed germination and early seedling growth by mediating specific cytoplasmic mRNA decay of transcripts coding for the abscisic acid (ABA) biosynthetic enzymes NCED5 and NCED6, and the ABA signaling transcription factors ABI3 and ABI4. This Arabidopsis thaliana (Mouse-ear cress) protein is Exosome complex component RRP41-like.